The chain runs to 359 residues: MAEPARALRVVRIYLDGAHGLGKTTTGRALAAASTAGEGVLFFPEPMAYWRTMFVTDALSGILAASARCAAASHGSARGAGGPAHRADADAAGLVAYYQARFAAPYLILHARVSALLAPPGPAPGGTVTLVFDRHPVAACLCYPFARYCLREINAEDLLMLAAAMPPEAPGANLVVCTLPPAEQQRRLAARARPGDRADAGFLVAVRNAYALLVNTCAFLRAGGAWRDGWDALEWADANALAALADPSCDECKMAPAPALRDTLFAALKCRELYPGGGAGLPAVHAWALDALAGRLAALEVFVLDVSAAPDACAAAVLDMRPAMQAACADGAAGATLATLARQFALEMAGEATAGPRGL.

G17–T24 serves as a coordination point for ATP. The Proton acceptor role is filled by E45. Q99 is a binding site for substrate. R187 provides a ligand contact to ATP. Residue R193 participates in substrate binding.

The protein belongs to the herpesviridae thymidine kinase family. As to quaternary structure, homodimer.

The catalysed reaction is thymidine + ATP = dTMP + ADP + H(+). Its function is as follows. Catalyzes the transfer of the gamma-phospho group of ATP to thymidine to generate dTMP in the salvage pathway of pyrimidine synthesis. The dTMP serves as a substrate for DNA polymerase during viral DNA replication. Allows the virus to be reactivated and to grow in non-proliferative cells lacking a high concentration of phosphorylated nucleic acid precursors. The chain is Thymidine kinase from Bos taurus (Bovine).